The sequence spans 354 residues: Methylthioribose-1-phosphate isomerase (354 aa).

Substrate-binding positions include R58–A60, R101, and Q204. D245 (proton donor) is an active-site residue. A substrate-binding site is contributed by N255 to K256.

The protein belongs to the eIF-2B alpha/beta/delta subunits family. MtnA subfamily.

It catalyses the reaction 5-(methylsulfanyl)-alpha-D-ribose 1-phosphate = 5-(methylsulfanyl)-D-ribulose 1-phosphate. It participates in amino-acid biosynthesis; L-methionine biosynthesis via salvage pathway; L-methionine from S-methyl-5-thio-alpha-D-ribose 1-phosphate: step 1/6. Its function is as follows. Catalyzes the interconversion of methylthioribose-1-phosphate (MTR-1-P) into methylthioribulose-1-phosphate (MTRu-1-P). In Stenotrophomonas maltophilia (strain R551-3), this protein is Methylthioribose-1-phosphate isomerase.